Here is a 367-residue protein sequence, read N- to C-terminus: UDP-D-xylose:L-fucose alpha-1,3-D-xylosyltransferase (367 aa).

Residues methionine 1–glutamine 10 show a composition bias toward polar residues. A disordered region spans residues methionine 1–tyrosine 21. Over methionine 1–asparagine 35 the chain is Cytoplasmic. Over residues arginine 12 to tyrosine 21 the composition is skewed to low complexity. Residues glycine 36 to glycine 56 form a helical; Signal-anchor for type II membrane protein membrane-spanning segment. The Lumenal segment spans residues serine 57 to glutamine 367. Asparagine 85, asparagine 98, and asparagine 173 each carry an N-linked (GlcNAc...) asparagine glycan. Positions aspartate 196 to aspartate 198 match the DXD motif motif. Asparagine 228 and asparagine 292 each carry an N-linked (GlcNAc...) asparagine glycan.

Belongs to the glycosyltransferase 77 family. The cofactor is Mn(2+). Mg(2+) is required as a cofactor. In terms of processing, glycosylated. As to expression, expressed in roots, rosette leaves, stems and flowers.

It is found in the golgi apparatus membrane. In terms of biological role, catalyzes the transfer of D-xylose from UDP-alpha-D-xylose onto L-fucose. Probably involved in the biosynthesis of rhamnogalacturonan II (RG-II) through xylosylation of the internal fucose moiety of the A-chain of RG-II, a structurally complex pectic polysaccharide of the primary cell wall. RG-II is essential for the cell wall integrity of rapidly growing tissues such as roots and pollen tube growth and elongation. In Arabidopsis thaliana (Mouse-ear cress), this protein is UDP-D-xylose:L-fucose alpha-1,3-D-xylosyltransferase.